A 599-amino-acid chain; its full sequence is Spermatogenesis-associated protein 7 (599 aa).

The segment at 163-205 (KSSKVITNGPEKNSSSSPSSVDYAASGPRKLSSGALYGRRPRS) is disordered. The segment covering 166–175 (KVITNGPEKN) has biased composition (polar residues).

As to quaternary structure, found in a complex with CFAP410, NEK1 and SPATA7. Interacts with NEK1. Interacts with RPGRIP1. Interacts with RPGR. Interacts with NPHP4. Interacts with NPHP1. Interacts with AHI1.

It is found in the cytoplasm. It localises to the cytoskeleton. The protein localises to the cilium axoneme. Its subcellular location is the cilium basal body. The protein resides in the cell projection. It is found in the cilium. It localises to the photoreceptor outer segment. Involved in the maintenance of both rod and cone photoreceptor cells. It is required for recruitment and proper localization of RPGRIP1 to the photoreceptor connecting cilium (CC), as well as photoreceptor-specific localization of proximal CC proteins at the distal CC. Maintenance of protein localization at the photoreceptor-specific distal CC is essential for normal microtubule stability and to prevent photoreceptor degeneration. The protein is Spermatogenesis-associated protein 7 (SPATA7) of Homo sapiens (Human).